We begin with the raw amino-acid sequence, 424 residues long: MGVSIVLGSQWGDEGKGKITDMLAQQATLCCRAAGGHNAGHTIVHGNKTYDFHILPSGLISPSCINLIGAGTVVHVPSFFKELASLEEKGLEGASKRIFISDRAHVCLQLHSVVDGLEEAKLGGRKVGTTGKGIGPCYSDKASRRGIRVGEILDEAVFERKLRSLDAGYRARFGDLEYNVEEELAQFKEYRKLLGPYIVDQLAFLQKYKDSPNTLVEGANALMLDLDHGTYPYVTSSSTGLGGAMQALSLNPTSIKSVIGVVKAYTTRVGSGPFPSEQFNADGDKLQSVGREFGVTTGRRRRCGWLDLVVCRYSQAINHYTALNLTKLDVLDDFDEIKVGVAYILPDGTRTENTIPADAEVLEKVKVEYVTLPGWKSNTMGVKKYEDLPDNARAYIEYIERELGGVPVKWIGTGPARDDMIARE.

Residues 12-18 and 40-42 contribute to the GTP site; these read GDEGKGK and GHT. The Proton acceptor role is filled by aspartate 13. 2 residues coordinate Mg(2+): aspartate 13 and glycine 40. IMP-binding positions include 13–16, 38–41, threonine 130, arginine 144, asparagine 220, threonine 235, and arginine 299; these read DEGK and NAGH. Histidine 41 serves as the catalytic Proton donor. Position 295 to 301 (295 to 301) interacts with substrate; the sequence is VTTGRRR. Residues arginine 301, 327–329, and 412–414 each bind GTP; these read KLD and GTG.

The protein belongs to the adenylosuccinate synthetase family. Homodimer. Mg(2+) is required as a cofactor.

It is found in the cytoplasm. The enzyme catalyses IMP + L-aspartate + GTP = N(6)-(1,2-dicarboxyethyl)-AMP + GDP + phosphate + 2 H(+). The protein operates within purine metabolism; AMP biosynthesis via de novo pathway; AMP from IMP: step 1/2. Functionally, plays an important role in the de novo pathway and in the salvage pathway of purine nucleotide biosynthesis. Catalyzes the first committed step in the biosynthesis of AMP from IMP. The chain is Adenylosuccinate synthetase from Aspergillus flavus (strain ATCC 200026 / FGSC A1120 / IAM 13836 / NRRL 3357 / JCM 12722 / SRRC 167).